The sequence spans 261 residues: tRNA pseudouridine synthase A (261 aa).

Asp52 functions as the Nucleophile in the catalytic mechanism. Tyr110 is a binding site for substrate.

Belongs to the tRNA pseudouridine synthase TruA family. As to quaternary structure, homodimer.

It catalyses the reaction uridine(38/39/40) in tRNA = pseudouridine(38/39/40) in tRNA. Formation of pseudouridine at positions 38, 39 and 40 in the anticodon stem and loop of transfer RNAs. The chain is tRNA pseudouridine synthase A from Coxiella burnetii (strain CbuK_Q154) (Coxiella burnetii (strain Q154)).